The sequence spans 135 residues: uncharacterized protein (135 aa).

This is an uncharacterized protein from Bacillus subtilis (strain 168).